Consider the following 263-residue polypeptide: Phosphatidylglycerol--prolipoprotein diacylglyceryl transferase (263 aa).

Transmembrane regions (helical) follow at residues 15 to 35 (ISIHWYAICIVSGLLLAVYLA), 52 to 72 (FILLAFPIAIVGARLYYVIFQ), 83 to 103 (IFAIWNGGIAIYGGLIAGAAV), and 112 to 132 (AIAVLDFLDIAAPGVMIAQSI). R134 lines the a 1,2-diacyl-sn-glycero-3-phospho-(1'-sn-glycerol) pocket. 3 consecutive transmembrane segments (helical) span residues 170-190 (VPTFLYESLWNLVGFSIILGL), 200-220 (GDVTSFYLIWYGLGRFVIEGM), and 230-250 (LRVSQWVSISIIILGAVLLYF).

This sequence belongs to the Lgt family.

The protein localises to the cell membrane. The enzyme catalyses L-cysteinyl-[prolipoprotein] + a 1,2-diacyl-sn-glycero-3-phospho-(1'-sn-glycerol) = an S-1,2-diacyl-sn-glyceryl-L-cysteinyl-[prolipoprotein] + sn-glycerol 1-phosphate + H(+). It participates in protein modification; lipoprotein biosynthesis (diacylglyceryl transfer). In terms of biological role, catalyzes the transfer of the diacylglyceryl group from phosphatidylglycerol to the sulfhydryl group of the N-terminal cysteine of a prolipoprotein, the first step in the formation of mature lipoproteins. The chain is Phosphatidylglycerol--prolipoprotein diacylglyceryl transferase from Streptococcus thermophilus (strain ATCC BAA-250 / LMG 18311).